Reading from the N-terminus, the 473-residue chain is Hyaluronidase-2 (473 aa).

The signal sequence occupies residues 1-20 (MRAGLGPIITLALVLEVAWA). 2 disulfide bridges follow: C47–C340 and C211–C227. 2 N-linked (GlcNAc...) asparagine glycosylation sites follow: N74 and N103. The active-site Proton donor is the E135. N-linked (GlcNAc...) asparagine glycosylation occurs at N357. The 79-residue stretch at 361–439 (ATQYCSWTQC…YLGWGGEQCQ (79 aa)) folds into the EGF-like domain. 3 disulfide bridges follow: C365-C376, C370-C427, and C429-C438. D448 is lipidated: GPI-anchor amidated aspartate. A propeptide spans 449–473 (ASRAWAGAHLASLLGLVAMTLTWTL) (removed in mature form).

The protein belongs to the glycosyl hydrolase 56 family. Interacts with MST1R.

Its subcellular location is the cell membrane. The catalysed reaction is Random hydrolysis of (1-&gt;4)-linkages between N-acetyl-beta-D-glucosamine and D-glucuronate residues in hyaluronate.. Catalyzes hyaluronan degradation into small fragments that are endocytosed and degraded in lysosomes by HYAL1 and exoglycosidases. Essential for the breakdown of extracellular matrix hyaluronan. In Rattus norvegicus (Rat), this protein is Hyaluronidase-2 (Hyal2).